A 368-amino-acid chain; its full sequence is 1-deoxy-D-xylulose 5-phosphate reductoisomerase (368 aa).

NADPH contacts are provided by T7, G8, S9, I10, G31, K32, N33, and N113. Residue K114 coordinates 1-deoxy-D-xylulose 5-phosphate. E115 provides a ligand contact to NADPH. D133 provides a ligand contact to Mn(2+). 1-deoxy-D-xylulose 5-phosphate-binding residues include S134, E135, S158, and H181. A Mn(2+)-binding site is contributed by E135. G187 serves as a coordination point for NADPH. Residues S194, N199, K200, and E203 each contribute to the 1-deoxy-D-xylulose 5-phosphate site. E203 provides a ligand contact to Mn(2+).

It belongs to the DXR family. Requires Mg(2+) as cofactor. The cofactor is Mn(2+).

The enzyme catalyses 2-C-methyl-D-erythritol 4-phosphate + NADP(+) = 1-deoxy-D-xylulose 5-phosphate + NADPH + H(+). Its pathway is isoprenoid biosynthesis; isopentenyl diphosphate biosynthesis via DXP pathway; isopentenyl diphosphate from 1-deoxy-D-xylulose 5-phosphate: step 1/6. In terms of biological role, catalyzes the NADPH-dependent rearrangement and reduction of 1-deoxy-D-xylulose-5-phosphate (DXP) to 2-C-methyl-D-erythritol 4-phosphate (MEP). In Helicobacter pylori (strain HPAG1), this protein is 1-deoxy-D-xylulose 5-phosphate reductoisomerase.